The following is a 337-amino-acid chain: Anaerobic sulfite reductase subunit C (337 aa).

[4Fe-4S] cluster-binding residues include Cys-115, Cys-121, Cys-153, Cys-157, Cys-180, Cys-183, Cys-186, Cys-190, Cys-212, Cys-215, Cys-218, and Cys-222. A siroheme-binding site is contributed by Cys-157. 2 4Fe-4S ferredoxin-type domains span residues 171-200 (AKMRFTADRCIGCGACVKACSHHAVGCLAL) and 203-232 (GKAVKEESACIGCGECVLACPTLAWQRKPD).

The protein belongs to the nitrite and sulfite reductase 4Fe-4S domain family. The anaerobic sulfite reductase seems to consist of three subunits. It depends on [4Fe-4S] cluster as a cofactor. The cofactor is siroheme.

It is found in the cytoplasm. It catalyses the reaction hydrogen sulfide + 3 NAD(+) + 3 H2O = sulfite + 3 NADH + 4 H(+). It participates in sulfur metabolism; sulfite reduction. Its function is as follows. This enzyme catalyzes the hydrogen sulfide production from sulfite. It is strictly anaerobic. It is regulated by electron acceptors rather than by cysteine. This chain is Anaerobic sulfite reductase subunit C (asrC), found in Salmonella typhi.